The sequence spans 359 residues: Phosphoserine aminotransferase (359 aa).

Arg41 is an L-glutamate binding site. Pyridoxal 5'-phosphate-binding positions include 75–76 (AS), Trp101, Thr152, Asp171, and Gln194. An N6-(pyridoxal phosphate)lysine modification is found at Lys195. 236-237 (NT) lines the pyridoxal 5'-phosphate pocket.

This sequence belongs to the class-V pyridoxal-phosphate-dependent aminotransferase family. SerC subfamily. As to quaternary structure, homodimer. Pyridoxal 5'-phosphate is required as a cofactor.

The protein localises to the cytoplasm. It carries out the reaction O-phospho-L-serine + 2-oxoglutarate = 3-phosphooxypyruvate + L-glutamate. The catalysed reaction is 4-(phosphooxy)-L-threonine + 2-oxoglutarate = (R)-3-hydroxy-2-oxo-4-phosphooxybutanoate + L-glutamate. Its pathway is amino-acid biosynthesis; L-serine biosynthesis; L-serine from 3-phospho-D-glycerate: step 2/3. It participates in cofactor biosynthesis; pyridoxine 5'-phosphate biosynthesis; pyridoxine 5'-phosphate from D-erythrose 4-phosphate: step 3/5. Its function is as follows. Catalyzes the reversible conversion of 3-phosphohydroxypyruvate to phosphoserine and of 3-hydroxy-2-oxo-4-phosphonooxybutanoate to phosphohydroxythreonine. The protein is Phosphoserine aminotransferase of Acinetobacter baylyi (strain ATCC 33305 / BD413 / ADP1).